Consider the following 406-residue polypeptide: Phosphatidylinositol 5-phosphate 4-kinase type-2 alpha (406 aa).

A2 bears the N-acetylalanine mark. At T3 the chain carries Phosphothreonine. Position 14 is a phosphoserine (S14). The PIPK domain occupies 33 to 405 (ASDPLLSVLM…RFLDFIGHIL (373 aa)). Positions 59-65 (VMLMPDD) are required for interaction with PIP5K1A. K89 and K145 each carry N6-acetyllysine. Residues 287–328 (EQEEVECEENEGEEEGESDGAHPIGTPPDSPGNTLNSSPPLA) form a disordered region. Residues 289–304 (EEVECEENEGEEEGES) are compositionally biased toward acidic residues.

In terms of assembly, homodimer. Interacts with PIP4K2B; the interaction may regulate localization to the nucleus. Probably interacts with PIP5K1A; the interaction inhibits PIP5K1A kinase activity. Phosphorylated in tyrosines. Phosphorylation is induced by light and increases kinase activity.

It is found in the cell membrane. It localises to the nucleus. The protein resides in the lysosome. Its subcellular location is the cytoplasm. The protein localises to the photoreceptor inner segment. It is found in the cell projection. It localises to the cilium. The protein resides in the photoreceptor outer segment. It catalyses the reaction a 1,2-diacyl-sn-glycero-3-phospho-(1D-myo-inositol-5-phosphate) + ATP = a 1,2-diacyl-sn-glycero-3-phospho-(1D-myo-inositol-4,5-bisphosphate) + ADP + H(+). The enzyme catalyses 1,2-dihexadecanoyl-sn-glycero-3-phospho-(1D-myo-inositol-5-phosphate) + ATP = 1,2-dihexadecanoyl-sn-glycero-3-phospho-(1D-myo-inositol-4,5-bisphosphate) + ADP + H(+). The catalysed reaction is 1,2-dihexadecanoyl-sn-glycero-3-phospho-(1D-myo-inositol-5-phosphate) + GTP = 1,2-dihexadecanoyl-sn-glycero-3-phospho-(1D-myo-inositol-4,5-bisphosphate) + GDP + H(+). In rod outer segments, activated by light. Functionally, catalyzes the phosphorylation of phosphatidylinositol 5-phosphate (PtdIns5P) on the fourth hydroxyl of the myo-inositol ring, to form phosphatidylinositol 4,5-bisphosphate (PtdIns(4,5)P2). Has both ATP- and GTP-dependent kinase activities. May exert its function by regulating the levels of PtdIns5P, which functions in the cytosol by increasing AKT activity and in the nucleus signals through ING2. May regulate the pool of cytosolic PtdIns5P in response to the activation of tyrosine phosphorylation. Required for lysosome-peroxisome membrane contacts and intracellular cholesterol transport through modulating peroxisomal PtdIns(4,5)P2 level. In collaboration with PIP4K2B, has a role in mediating autophagy in times of nutrient stress. Required for autophagosome-lysosome fusion and the regulation of cellular lipid metabolism. Negatively regulates insulin signaling through a catalytic-independent mechanism. PIP4Ks interact with PIP5Ks and suppress PIP5K-mediated PtdIns(4,5)P2 synthesis and insulin-dependent conversion to PtdIns(3,4,5)P3. May be involved in thrombopoiesis, and the terminal maturation of megakaryocytes and regulation of their size. This is Phosphatidylinositol 5-phosphate 4-kinase type-2 alpha from Rattus norvegicus (Rat).